Reading from the N-terminus, the 265-residue chain is MQTQSLNQTSYVFRTENLNVYYGSNLAVKNVTLDIPARQITAFIGPSGCGKSTILRCFNRTNDLIPGARVEGKLTYHGKDLYAKEVDPVAVRRRIGMVFQRPNPFPKSIYDNVAYGPRVLGMKVDLDEVVETSLKRAALWDEVKDKLKENGQSLSGGQQQRLCIARALAVQPDVILMDEPCSALDPISTRRIEELMKELEEEYTIIIVTHNMQQASRVSDMTAFFSVELVGSNRVGELIEFDRTEVIFNSPTKQATRDYVEGRFG.

The ABC transporter domain maps to 13-260 (FRTENLNVYY…PTKQATRDYV (248 aa)). Residue 45–52 (GPSGCGKS) participates in ATP binding.

The protein belongs to the ABC transporter superfamily. Phosphate importer (TC 3.A.1.7) family. As to quaternary structure, the complex is composed of two ATP-binding proteins (PstB), two transmembrane proteins (PstC and PstA) and a solute-binding protein (PstS).

It is found in the cell inner membrane. It carries out the reaction phosphate(out) + ATP + H2O = ADP + 2 phosphate(in) + H(+). Its function is as follows. Part of the ABC transporter complex PstSACB involved in phosphate import. Responsible for energy coupling to the transport system. The polypeptide is Phosphate import ATP-binding protein PstB 2 (Synechococcus sp. (strain JA-2-3B'a(2-13)) (Cyanobacteria bacterium Yellowstone B-Prime)).